The following is a 63-amino-acid chain: Small ribosomal subunit protein bS21 (63 aa).

The protein belongs to the bacterial ribosomal protein bS21 family.

The polypeptide is Small ribosomal subunit protein bS21 (Parabacteroides distasonis (strain ATCC 8503 / DSM 20701 / CIP 104284 / JCM 5825 / NCTC 11152)).